A 249-amino-acid polypeptide reads, in one-letter code: Molybdate/tungstate transport system permease protein WtpB (249 aa).

At 1–10 (MDRRDYLAYA) the chain is on the cytoplasmic side. The helical transmembrane segment at 11 to 31 (FAGLGAFLVAFIGLPLFMIFI) threads the bilayer. The Extracellular portion of the chain corresponds to 32 to 56 (KQAYDLEALQRTLVDPLVIESIRNS). Positions 53-239 (IRNSLFTATV…TISLAVFIFL (187 aa)) constitute an ABC transmembrane type-1 domain. The helical transmembrane segment at 57-77 (LFTATVSTLLGILFGVPLGYV) threads the bilayer. Residues 78-96 (LARKEFKGKNFVQALIDTP) are Cytoplasmic-facing. The chain crosses the membrane as a helical span at residues 97–117 (IVIPHSVVGIMLLVTFSDAIL). Position 118 (Asp118) is a topological domain, extracellular. The chain crosses the membrane as a helical span at residues 119-139 (NYKGIVAVMLFVSSPFIVNSA). The Cytoplasmic segment spans residues 140-179 (RDGFLSVDEKLEYVARTLGASGLRTFFSVTLPNAIHSIAS). Residues 180–200 (GAIMAWARAISEVGAILIVAY) form a helical membrane-spanning segment. At 201 to 223 (YPKTAQVLIMEYFNNYGLRASRP) the chain is on the extracellular side. A helical membrane pass occupies residues 224-244 (IAVILVTISLAVFIFLRWLVG). Topologically, residues 245 to 249 (RGRNA) are cytoplasmic.

Belongs to the binding-protein-dependent transport system permease family. In terms of assembly, the complex is composed of two ATP-binding proteins (WtpC), two transmembrane proteins (WtpB) and a solute-binding protein (WtpA).

The protein localises to the cell membrane. Part of the ABC transporter complex WtpABC involved in molybdate/tungstate import. Probably responsible for the translocation of the substrate across the membrane. The polypeptide is Molybdate/tungstate transport system permease protein WtpB (Pyrococcus furiosus (strain ATCC 43587 / DSM 3638 / JCM 8422 / Vc1)).